We begin with the raw amino-acid sequence, 766 residues long: LPS-assembly protein LptD (766 aa).

The N-terminal stretch at 1–18 (MQIRYFLALSLLPNIVLA) is a signal peptide.

Belongs to the LptD family. Component of the lipopolysaccharide transport and assembly complex. Interacts with LptE and LptA.

The protein resides in the cell outer membrane. Functionally, together with LptE, is involved in the assembly of lipopolysaccharide (LPS) at the surface of the outer membrane. In Shewanella frigidimarina (strain NCIMB 400), this protein is LPS-assembly protein LptD.